The sequence spans 372 residues: Queuine tRNA-ribosyltransferase (372 aa).

The active-site Proton acceptor is the aspartate 93. Substrate-binding positions include 93–97, aspartate 147, glutamine 190, and glycine 217; that span reads DSGGF. Residues 248-254 are RNA binding; it reads GVGSPDC. Catalysis depends on aspartate 267, which acts as the Nucleophile. The tract at residues 272-276 is RNA binding; important for wobble base 34 recognition; the sequence is TRMAR. Residues cysteine 305, cysteine 307, cysteine 310, and histidine 336 each contribute to the Zn(2+) site.

It belongs to the queuine tRNA-ribosyltransferase family. In terms of assembly, homodimer. Within each dimer, one monomer is responsible for RNA recognition and catalysis, while the other monomer binds to the replacement base PreQ1. Requires Zn(2+) as cofactor.

It carries out the reaction 7-aminomethyl-7-carbaguanine + guanosine(34) in tRNA = 7-aminomethyl-7-carbaguanosine(34) in tRNA + guanine. Its pathway is tRNA modification; tRNA-queuosine biosynthesis. Catalyzes the base-exchange of a guanine (G) residue with the queuine precursor 7-aminomethyl-7-deazaguanine (PreQ1) at position 34 (anticodon wobble position) in tRNAs with GU(N) anticodons (tRNA-Asp, -Asn, -His and -Tyr). Catalysis occurs through a double-displacement mechanism. The nucleophile active site attacks the C1' of nucleotide 34 to detach the guanine base from the RNA, forming a covalent enzyme-RNA intermediate. The proton acceptor active site deprotonates the incoming PreQ1, allowing a nucleophilic attack on the C1' of the ribose to form the product. After dissociation, two additional enzymatic reactions on the tRNA convert PreQ1 to queuine (Q), resulting in the hypermodified nucleoside queuosine (7-(((4,5-cis-dihydroxy-2-cyclopenten-1-yl)amino)methyl)-7-deazaguanosine). The protein is Queuine tRNA-ribosyltransferase of Desulforudis audaxviator (strain MP104C).